The chain runs to 795 residues: Phospholipase A-2-activating protein (795 aa).

WD repeat units follow at residues 17–56 (HELDVRGLVCCAYPPGAFVSVSRDRTTRLWAPDSPNRSFT), 63–107 (GHSN…PLYI), 110–148 (GHKNTVCSLSSGKFGTLLSGSWDTTAKVWLNDKCMMTLQ), 149–188 (GHTAAVWAVKILPEQGLMLTGSADKTVKLWKAGRCERTFS), 190–227 (HEDCVRGLAILSETEFLSCANDASIRRWQITGECLEVY), 229–268 (GHTNYIYSISVFPNCRDFVTTAEDRSLRIWKHGECAQTIR), and 270–307 (PAQSIWCCCVLDNGDIVVGASDGIIRVFTESEDRTASA). The residue at position 50 (S50) is a Phosphoserine. The region spanning 366-465 (QWSVSEGRWI…KGQMLGLGNP (100 aa)) is the PFU domain. K529 is subject to N6-acetyllysine. Positions 533 to 794 (IYFPKKEAVT…SECCRFILNL (262 aa)) constitute a PUL domain. ARM repeat units follow at residues 546–588 (ANPT…NSSS), 589–620 (EKPTVQQLQILWKAINCPEDIVFPALDILRLS), 621–669 (IKHP…CFVG), 670–715 (QAGQ…CFHK), 716–755 (DHNIEGKAQCLSLISTILEVVQDLEATFRLLVALGTLISD), and 756–795 (DSNAVQLAKSLGVDSQIKKYSSVSEPAKVSECCRFILNLL).

It belongs to the WD repeat PLAP family. Interacts with ubiquitin. Interacts with UBXN6, VCP and YOD1; may form a complex involved in macroautophagy.

The protein resides in the nucleus. The protein localises to the cytoplasm. It is found in the synapse. Functionally, plays a role in protein ubiquitination, sorting and degradation through its association with VCP. Involved in ubiquitin-mediated membrane proteins trafficking to late endosomes in an ESCRT-dependent manner, and hence plays a role in synaptic vesicle recycling. May play a role in macroautophagy, regulating for instance the clearance of damaged lysosomes. Plays a role in cerebellar Purkinje cell development. Positively regulates cytosolic and calcium-independent phospholipase A2 activities in a tumor necrosis factor alpha (TNF-alpha)- or lipopolysaccharide (LPS)-dependent manner, and hence prostaglandin E2 biosynthesis. This chain is Phospholipase A-2-activating protein (PLAA), found in Homo sapiens (Human).